The primary structure comprises 507 residues: Protein MosB (507 aa).

A DNA-binding region (H-T-H motif) is located at residues 256–275 (QAHGALYKGQHVGLLSDIGC). Position 282 is an N6-(pyridoxal phosphate)lysine (Lys-282).

This sequence belongs to the DegT/DnrJ/EryC1 family.

Functionally, involved in the biosynthesis of the rhizopine 3-O-methyl-scyllo-inosamine. May have a regulatory role in controlling the housekeeping genes within the nodule which are involved in the biosynthesis of the rhizopine backbone. The sequence is that of Protein MosB (mosB) from Rhizobium meliloti (Ensifer meliloti).